Reading from the N-terminus, the 505-residue chain is MSAKIKVDEISSIIKERIENFELNINIEETGKVVNVADGVASVYGLKNVMANEMVEFENGVKGLALNLEENSVGVVILGSISGIVEGTSVKRLGKLLRVPVGDALIGRVVNALGEPIDAKGPIEYSETRFVEEKAKGIMARKSVHEPLQTGLKAIDALVPIGRGQRELIIGDRQTGKTTVAVDTIINQKGQDVICIYVAIGQKQSTVAQVVKKLEEYGAMDYTIVVSAGASEPAALQYLAPYAGCTMGEYFRDNSRHALIIYDDLSKHAVAYREMSLILRRPPGREAYPGDVFYLHSRLLERASKLSDELGAGSLTALPIIETQAGDVSAYIPTNVISITDGQIFLESGLFNSGIRPAINVGLSVSRVGGSAQIKAIKKVSGTLRLDLAQYRELQAFAQFASDLDESSRKQLDRGQRMVEILKQPPYSPLPVENQIVIIFAGSRGFLDDIPVSAIGKFENELYSFIEAKYPNIFEDIRTKKTIEKDLEENLAKALNDFKMTFSVK.

171–178 (GDRQTGKT) is an ATP binding site.

It belongs to the ATPase alpha/beta chains family. As to quaternary structure, F-type ATPases have 2 components, CF(1) - the catalytic core - and CF(0) - the membrane proton channel. CF(1) has five subunits: alpha(3), beta(3), gamma(1), delta(1), epsilon(1). CF(0) has three main subunits: a(1), b(2) and c(9-12). The alpha and beta chains form an alternating ring which encloses part of the gamma chain. CF(1) is attached to CF(0) by a central stalk formed by the gamma and epsilon chains, while a peripheral stalk is formed by the delta and b chains.

It localises to the cell inner membrane. The enzyme catalyses ATP + H2O + 4 H(+)(in) = ADP + phosphate + 5 H(+)(out). Functionally, produces ATP from ADP in the presence of a proton gradient across the membrane. The alpha chain is a regulatory subunit. This is ATP synthase subunit alpha from Campylobacter hominis (strain ATCC BAA-381 / DSM 21671 / CCUG 45161 / LMG 19568 / NCTC 13146 / CH001A).